Here is a 188-residue protein sequence, read N- to C-terminus: MSQIIHAKDLRPGNTFIYKNNLYLVIENSFNKTAMREGIVKCKVKNLRTSSITVEVLTGEKLERAIIDKVKAMYSYADKNTLVFMDGESFEQIEIDANKLKWEKNFIVDGSEVSILKYGEEVLNVSLPDQVSLLVDFAEEAVQGNTVQTAMKKARLETGLEIEVPQFIKTGEKIIVNTVDGKYVGRDK.

This sequence belongs to the elongation factor P family.

The protein resides in the cytoplasm. It participates in protein biosynthesis; polypeptide chain elongation. Involved in peptide bond synthesis. Stimulates efficient translation and peptide-bond synthesis on native or reconstituted 70S ribosomes in vitro. Probably functions indirectly by altering the affinity of the ribosome for aminoacyl-tRNA, thus increasing their reactivity as acceptors for peptidyl transferase. This is Elongation factor P from Malacoplasma penetrans (strain HF-2) (Mycoplasma penetrans).